The primary structure comprises 71 residues: Large ribosomal subunit protein bL31 (71 aa).

4 residues coordinate Zn(2+): Cys16, Cys18, Cys36, and Cys39.

The protein belongs to the bacterial ribosomal protein bL31 family. Type A subfamily. Part of the 50S ribosomal subunit. It depends on Zn(2+) as a cofactor.

In terms of biological role, binds the 23S rRNA. This is Large ribosomal subunit protein bL31 from Thermus thermophilus (strain ATCC BAA-163 / DSM 7039 / HB27).